Here is a 214-residue protein sequence, read N- to C-terminus: Reticulon-3-A (214 aa).

Residues Met-1–Gly-21 are disordered. The 189-residue stretch at Val-26–Glu-214 folds into the Reticulon domain. 2 consecutive transmembrane segments (helical) span residues Met-46–Leu-66 and Val-155–Val-175.

In terms of assembly, homodimer. In terms of tissue distribution, expressed in the animal hemisphere at the four-cell stage. During gastrulation, expression becomes restricted to the prospective neuroectoderm. At the early tail bud stage, expressed in the head structure. At the tadpole stage, expressed in head and neural tissues including the otic vesicle and optic nerve.

The protein localises to the endoplasmic reticulum membrane. Its subcellular location is the golgi apparatus membrane. May be involved in membrane trafficking in the early secretory pathway. The sequence is that of Reticulon-3-A (rtn3-a) from Xenopus laevis (African clawed frog).